Here is a 239-residue protein sequence, read N- to C-terminus: 2,3,4,5-tetrahydropyridine-2,6-dicarboxylate N-acetyltransferase (239 aa).

Belongs to the transferase hexapeptide repeat family. DapH subfamily.

It carries out the reaction (S)-2,3,4,5-tetrahydrodipicolinate + acetyl-CoA + H2O = L-2-acetamido-6-oxoheptanedioate + CoA. The protein operates within amino-acid biosynthesis; L-lysine biosynthesis via DAP pathway; LL-2,6-diaminopimelate from (S)-tetrahydrodipicolinate (acetylase route): step 1/3. Its function is as follows. Catalyzes the transfer of an acetyl group from acetyl-CoA to tetrahydrodipicolinate. In Staphylococcus aureus (strain bovine RF122 / ET3-1), this protein is 2,3,4,5-tetrahydropyridine-2,6-dicarboxylate N-acetyltransferase.